Consider the following 408-residue polypeptide: RUN domain-containing protein 3B (408 aa).

A disordered region spans residues 1 to 25; sequence MASRSLGGLSGSRGGGGGGGGKKSL. The span at 8 to 22 shows a compositional bias: gly residues; it reads GLSGSRGGGGGGGGK. Arg-13 carries the omega-N-methylarginine modification. Residues 58 to 190 form the RUN domain; that stretch reads DDSSPEFNNF…IDFSFCLKGE (133 aa). The interval 213–238 is disordered; it reads DSISSDEEELRTFGSSDSESSTPENV. Residues Ser-216 and Ser-217 each carry the phosphoserine modification. Over residues 225–236 the composition is skewed to polar residues; that stretch reads FGSSDSESSTPE. Residues 301–326 adopt a coiled-coil conformation; it reads AHKLEKEQLEYIIVELQDQLKSYQSL. Residues 337-359 form a disordered region; sequence QASLDPSHSQEGDGKQDSLNFIG.

The protein belongs to the RUNDC3 family. As to quaternary structure, interacts with RAP2A.

The chain is RUN domain-containing protein 3B (Rundc3b) from Mus musculus (Mouse).